We begin with the raw amino-acid sequence, 208 residues long: Thymidylate kinase (208 aa).

Residue 10–17 (GIDGSGKS) participates in ATP binding.

This sequence belongs to the thymidylate kinase family.

It carries out the reaction dTMP + ATP = dTDP + ADP. Its function is as follows. Phosphorylation of dTMP to form dTDP in both de novo and salvage pathways of dTTP synthesis. This is Thymidylate kinase from Jannaschia sp. (strain CCS1).